The following is a 133-amino-acid chain: Lymphocyte antigen 6 complex locus protein G6d (133 aa).

The first 19 residues, 1–19, serve as a signal peptide directing secretion; the sequence is MKPQFVGILLSSLLGAALG. One can recognise a UPAR/Ly6 domain in the interval 22–116; it reads MRCYNCGGSP…ASHVAPAGIL (95 aa). C27 and C35 are oxidised to a cystine. Residues T40 and T41 are each glycosylated (O-linked (GalNAc...) threonine). 2 cysteine pairs are disulfide-bonded: C42–C71 and C77–C96. The GPI-anchor amidated serine moiety is linked to residue S104. Positions 105–133 are cleaved as a propeptide — removed in mature form; it reads AVASHVAPAGILAAAATALTCLLPGLWSG.

In terms of assembly, homodimer. O-glycosylated. Expressed in the adult lung, and in fetal liver, lung, kidney, brain and spleen.

Its subcellular location is the cell membrane. It localises to the cell projection. The protein localises to the filopodium. This Homo sapiens (Human) protein is Lymphocyte antigen 6 complex locus protein G6d (LY6G6D).